The primary structure comprises 341 residues: MIEFQNVTKTFTLGKRKVEAVKEVSLTIEKGDIYGIIGFSGAGKSTLLRLVNMLERPTEGSVHIQGTDVGKLSAKQLRERRRNIGMIFQNFNLFQSRTVAGNIAYPLKLAGTSKSVVTKRVSELLQFVGLSDKAKDYPDQLSGGQKQRVGIARALATSPDILICDEATSALDPNTTSDILKLLKKVNRDLGITILLITHEMGVIQSICDKVAVMEDGKVIENGNVFDTFTKPSHETTKRFIRSVQQELPSEKVLKEWTEAGGGNLYRVLFKGERATDPILSSTTRKHNIDFNIVYGSVRELQEKLFGNLIVSFGGDEQQIQHVIQELELIVDIEEVYSHGG.

Residues 2–241 (IEFQNVTKTF…PSHETTKRFI (240 aa)) enclose the ABC transporter domain. 38 to 45 (GFSGAGKS) serves as a coordination point for ATP.

It belongs to the ABC transporter superfamily. Methionine importer (TC 3.A.1.24) family. As to quaternary structure, the complex is composed of two ATP-binding proteins (MetN), two transmembrane proteins (MetI) and a solute-binding protein (MetQ).

Its subcellular location is the cell membrane. The enzyme catalyses L-methionine(out) + ATP + H2O = L-methionine(in) + ADP + phosphate + H(+). It carries out the reaction D-methionine(out) + ATP + H2O = D-methionine(in) + ADP + phosphate + H(+). In terms of biological role, part of the ABC transporter complex MetNIQ involved in methionine import. Responsible for energy coupling to the transport system. The polypeptide is Methionine import ATP-binding protein MetN 3 (Oceanobacillus iheyensis (strain DSM 14371 / CIP 107618 / JCM 11309 / KCTC 3954 / HTE831)).